A 651-amino-acid chain; its full sequence is Beta-glucuronidase (651 aa).

Residues 1–22 (MSRGPAGAWVALGPLLWTCGLA) form the signal peptide. N-linked (GlcNAc...) asparagine glycans are attached at residues Asn-172 and Asn-419. Glu-450 acts as the Proton donor in catalysis. An N-linked (GlcNAc...) asparagine glycan is attached at Asn-630.

This sequence belongs to the glycosyl hydrolase 2 family. Homotetramer.

It is found in the lysosome. It catalyses the reaction a beta-D-glucuronoside + H2O = D-glucuronate + an alcohol. Inhibited by L-aspartic acid. In terms of biological role, plays an important role in the degradation of dermatan and keratan sulfates. The protein is Beta-glucuronidase (GUSB) of Canis lupus familiaris (Dog).